Here is a 499-residue protein sequence, read N- to C-terminus: Glutamyl-tRNA(Gln) amidotransferase subunit A (499 aa).

Catalysis depends on charge relay system residues Lys76 and Ser151. The active-site Acyl-ester intermediate is the Ser175.

Belongs to the amidase family. GatA subfamily. As to quaternary structure, heterotrimer of A, B and C subunits.

It carries out the reaction L-glutamyl-tRNA(Gln) + L-glutamine + ATP + H2O = L-glutaminyl-tRNA(Gln) + L-glutamate + ADP + phosphate + H(+). Allows the formation of correctly charged Gln-tRNA(Gln) through the transamidation of misacylated Glu-tRNA(Gln) in organisms which lack glutaminyl-tRNA synthetase. The reaction takes place in the presence of glutamine and ATP through an activated gamma-phospho-Glu-tRNA(Gln). This Rhodopirellula baltica (strain DSM 10527 / NCIMB 13988 / SH1) protein is Glutamyl-tRNA(Gln) amidotransferase subunit A.